A 524-amino-acid polypeptide reads, in one-letter code: Cytochrome P450 6k1 (524 aa).

Heme is bound at residue Cys-464.

This sequence belongs to the cytochrome P450 family. Heme serves as cofactor.

It localises to the endoplasmic reticulum membrane. Its subcellular location is the microsome membrane. This Blattella germanica (German cockroach) protein is Cytochrome P450 6k1 (CYP6K1).